A 412-amino-acid polypeptide reads, in one-letter code: Imidazolonepropionase (412 aa).

Histidine 73 and histidine 75 together coordinate Fe(3+). The Zn(2+) site is built by histidine 73 and histidine 75. Positions 82, 145, and 178 each coordinate 4-imidazolone-5-propanoate. Tyrosine 145 contacts N-formimidoyl-L-glutamate. Histidine 247 contributes to the Fe(3+) binding site. Histidine 247 contacts Zn(2+). Glutamine 250 provides a ligand contact to 4-imidazolone-5-propanoate. Aspartate 322 contributes to the Fe(3+) binding site. Aspartate 322 contacts Zn(2+). N-formimidoyl-L-glutamate contacts are provided by asparagine 324 and glycine 326. Serine 327 contacts 4-imidazolone-5-propanoate.

It belongs to the metallo-dependent hydrolases superfamily. HutI family. It depends on Zn(2+) as a cofactor. Requires Fe(3+) as cofactor.

It localises to the cytoplasm. It catalyses the reaction 4-imidazolone-5-propanoate + H2O = N-formimidoyl-L-glutamate. It participates in amino-acid degradation; L-histidine degradation into L-glutamate; N-formimidoyl-L-glutamate from L-histidine: step 3/3. Catalyzes the hydrolytic cleavage of the carbon-nitrogen bond in imidazolone-5-propanoate to yield N-formimidoyl-L-glutamate. It is the third step in the universal histidine degradation pathway. The protein is Imidazolonepropionase of Shewanella amazonensis (strain ATCC BAA-1098 / SB2B).